The sequence spans 624 residues: 1-deoxy-D-xylulose-5-phosphate synthase (624 aa).

Thiamine diphosphate is bound by residues H74 and 115–117; that span reads GHS. D146 is a Mg(2+) binding site. Residues 147–148, N175, Y286, and E366 contribute to the thiamine diphosphate site; that span reads GA. N175 contributes to the Mg(2+) binding site.

Belongs to the transketolase family. DXPS subfamily. As to quaternary structure, homodimer. Requires Mg(2+) as cofactor. The cofactor is thiamine diphosphate.

It catalyses the reaction D-glyceraldehyde 3-phosphate + pyruvate + H(+) = 1-deoxy-D-xylulose 5-phosphate + CO2. It participates in metabolic intermediate biosynthesis; 1-deoxy-D-xylulose 5-phosphate biosynthesis; 1-deoxy-D-xylulose 5-phosphate from D-glyceraldehyde 3-phosphate and pyruvate: step 1/1. In terms of biological role, catalyzes the acyloin condensation reaction between C atoms 2 and 3 of pyruvate and glyceraldehyde 3-phosphate to yield 1-deoxy-D-xylulose-5-phosphate (DXP). The polypeptide is 1-deoxy-D-xylulose-5-phosphate synthase (Clostridium kluyveri (strain NBRC 12016)).